Reading from the N-terminus, the 121-residue chain is Cytochrome c2 iso-2 (121 aa).

Cysteine 15, cysteine 18, histidine 19, and methionine 98 together coordinate heme c.

The protein belongs to the cytochrome c family. Post-translationally, binds 1 heme c group covalently per subunit.

Cytochrome c2 is found mainly in purple, non-sulfur, photosynthetic bacteria where it functions as the electron donor to the oxidized bacteriochlorophyll in the photophosphorylation pathway. However, it may also have a role in the respiratory chain and is found in some non-photosynthetic bacteria. This Rhodospirillum centenum (Rhodocista centenaria) protein is Cytochrome c2 iso-2.